Reading from the N-terminus, the 250-residue chain is Ribonuclease HII (250 aa).

The region spanning 66-250 is the RNase H type-2 domain; sequence QLVAGVDEVG…TFAPVSDFFK (185 aa). A divalent metal cation is bound by residues Asp-72, Glu-73, and Asp-164.

The protein belongs to the RNase HII family. Requires Mn(2+) as cofactor. Mg(2+) is required as a cofactor.

It is found in the cytoplasm. The catalysed reaction is Endonucleolytic cleavage to 5'-phosphomonoester.. Functionally, endonuclease that specifically degrades the RNA of RNA-DNA hybrids. The sequence is that of Ribonuclease HII from Lactobacillus acidophilus (strain ATCC 700396 / NCK56 / N2 / NCFM).